The following is a 514-amino-acid chain: Multifunctional alkaline phosphatase superfamily protein pRL90232 (514 aa).

Residues Asp12, Cys57, Asp324, and His325 each contribute to the Mn(2+) site. The active-site Nucleophile is Cys57. Position 57 is a 3-oxoalanine (Cys) (Cys57).

This sequence belongs to the alkaline phosphatase superfamily. As to quaternary structure, homotetramer. Mn(2+) is required as a cofactor. In terms of processing, the conversion to 3-oxoalanine (also known as C-formylglycine, FGly), of a serine or cysteine residue in prokaryotes and of a cysteine residue in eukaryotes, is critical for catalytic activity.

Its function is as follows. Hydrolytic enzyme with a broad substrate specificity acting on phosphate diesters and phosphonate monoesters. This is Multifunctional alkaline phosphatase superfamily protein pRL90232 from Rhizobium johnstonii (strain DSM 114642 / LMG 32736 / 3841) (Rhizobium leguminosarum bv. viciae).